The following is a 319-amino-acid chain: Aminoimidazole riboside kinase (319 aa).

D16, G31, and Y101 together coordinate 5-amino-1-(beta-D-ribosyl)imidazole. 158 to 160 (DVN) is a binding site for ATP. R162 contacts 5-amino-1-(beta-D-ribosyl)imidazole. K(+) is bound by residues A180, A181, and A183. Residues K187 and E192 each coordinate ATP. K(+) is bound at residue G213. 220–225 (SLGADG) contributes to the ATP binding site. Residues D246 and T248 each coordinate K(+). A 5-amino-1-(beta-D-ribosyl)imidazole-binding site is contributed by D252. The active-site Proton acceptor is D252. An ATP-binding site is contributed by N281. Residues A287, A290, and G292 each coordinate K(+).

This sequence belongs to the carbohydrate kinase PfkB family. Homodimer.

The enzyme catalyses 5-amino-1-(beta-D-ribosyl)imidazole + ATP = 5-amino-1-(5-phospho-beta-D-ribosyl)imidazole + ADP + H(+). With respect to regulation, potassium may regulate kinase activity. Phosphorylates 5-amino-1-(beta-D-ribosyl)imidazole (AIRs) to form 5-amino-1-(5-phospho-beta-D-ribosyl)imidazole (AIR), an important intermediate in the purine and thiamine biosynthetic pathways. It allows the use of exogenous aminoimidazole riboside (AIRs) to satisfy the cellular requirement for purines and thiamine. The chain is Aminoimidazole riboside kinase from Salmonella typhimurium (strain LT2 / SGSC1412 / ATCC 700720).